We begin with the raw amino-acid sequence, 513 residues long: Histidine ammonia-lyase (513 aa).

The segment at residues 145 to 147 (ASG) is a cross-link (5-imidazolinone (Ala-Gly)). Position 146 is a 2,3-didehydroalanine (Ser) (S146).

The protein belongs to the PAL/histidase family. In terms of processing, contains an active site 4-methylidene-imidazol-5-one (MIO), which is formed autocatalytically by cyclization and dehydration of residues Ala-Ser-Gly.

The protein resides in the cytoplasm. The enzyme catalyses L-histidine = trans-urocanate + NH4(+). The protein operates within amino-acid degradation; L-histidine degradation into L-glutamate; N-formimidoyl-L-glutamate from L-histidine: step 1/3. The chain is Histidine ammonia-lyase from Vibrio vulnificus (strain CMCP6).